Reading from the N-terminus, the 210-residue chain is 3-phospho-D-glycerate guanylyltransferase (210 aa).

This sequence belongs to the CofC family.

It catalyses the reaction (2R)-3-phosphoglycerate + GTP + H(+) = 3-[(R)-glyceryl]-diphospho-5'-guanosine + diphosphate. Its pathway is cofactor biosynthesis; coenzyme F420 biosynthesis. In terms of biological role, guanylyltransferase that catalyzes the activation of (2R)-3-phosphoglycerate (3PG) as 3-[(R)-glyceryl]-diphospho-5'-guanosine, via the condensation of 3PG with GTP. It is involved in the biosynthesis of a derivative of the hydride carrier cofactor coenzyme F420, 3PG-F420. This Colwellia psychrerythraea (strain 34H / ATCC BAA-681) (Vibrio psychroerythus) protein is 3-phospho-D-glycerate guanylyltransferase.